A 441-amino-acid polypeptide reads, in one-letter code: Xylose isomerase 1 (441 aa).

Residues His-105 and Asp-108 contribute to the active site. Mg(2+) contacts are provided by Glu-236, Glu-272, His-275, Asp-300, Asp-311, Asp-313, and Asp-343.

This sequence belongs to the xylose isomerase family. In terms of assembly, homotetramer. Requires Mg(2+) as cofactor.

It localises to the cytoplasm. It carries out the reaction alpha-D-xylose = alpha-D-xylulofuranose. The polypeptide is Xylose isomerase 1 (xylA1) (Xanthomonas axonopodis pv. citri (strain 306)).